A 170-amino-acid polypeptide reads, in one-letter code: Adenine phosphoribosyltransferase (170 aa).

This sequence belongs to the purine/pyrimidine phosphoribosyltransferase family. Homodimer.

It localises to the cytoplasm. It catalyses the reaction AMP + diphosphate = 5-phospho-alpha-D-ribose 1-diphosphate + adenine. It participates in purine metabolism; AMP biosynthesis via salvage pathway; AMP from adenine: step 1/1. In terms of biological role, catalyzes a salvage reaction resulting in the formation of AMP, that is energically less costly than de novo synthesis. The polypeptide is Adenine phosphoribosyltransferase (Acholeplasma laidlawii (strain PG-8A)).